A 713-amino-acid polypeptide reads, in one-letter code: Cytosolic endo-beta-N-acetylglucosaminidase (713 aa).

Residues 1-36 form a disordered region; that stretch reads MIARKRKSNGSETTSGKIPKDDVSSESCLDQPADES. Residues 270 to 362 form the BRCT domain; sequence FFDACDGFFT…DFRQNQDKFW (93 aa).

This sequence belongs to the glycosyl hydrolase 85 family.

It is found in the cytoplasm. The protein resides in the cytosol. It carries out the reaction an N(4)-(oligosaccharide-(1-&gt;3)-[oligosaccharide-(1-&gt;6)]-beta-D-Man-(1-&gt;4)-beta-D-GlcNAc-(1-&gt;4)-alpha-D-GlcNAc)-L-asparaginyl-[protein] + H2O = an oligosaccharide-(1-&gt;3)-[oligosaccharide-(1-&gt;6)]-beta-D-Man-(1-&gt;4)-D-GlcNAc + N(4)-(N-acetyl-beta-D-glucosaminyl)-L-asparaginyl-[protein]. Functionally, endoglycosidase that releases N-glycans from glycoproteins by cleaving the beta-1,4-glycosidic bond in the N,N'-diacetylchitobiose core. Involved in the processing of free oligosaccharides in the cytosol. This Danio rerio (Zebrafish) protein is Cytosolic endo-beta-N-acetylglucosaminidase (engase).